Reading from the N-terminus, the 317-residue chain is GTPase Era (317 aa).

The region spanning 17-190 is the Era-type G domain; the sequence is RAGFACFVGR…ADLLTPLLPE (174 aa). The tract at residues 25 to 32 is G1; sequence GRPNAGKS. Residue 25–32 coordinates GTP; it reads GRPNAGKS. Residues 51-55 form a G2 region; it reads QTTRH. Residues 72–75 are G3; sequence DTPG. GTP contacts are provided by residues 72 to 76 and 135 to 138; these read DTPGL and TKTD. Residues 135 to 138 are G4; the sequence is TKTD. The segment at 169–171 is G5; that stretch reads VSA. Residues 221 to 303 form the KH type-2 domain; it reads VRDELPHSIA…FLDLHVKVAK (83 aa).

This sequence belongs to the TRAFAC class TrmE-Era-EngA-EngB-Septin-like GTPase superfamily. Era GTPase family. In terms of assembly, monomer.

The protein resides in the cytoplasm. It is found in the cell membrane. Its function is as follows. An essential GTPase that binds both GDP and GTP, with rapid nucleotide exchange. Plays a role in 16S rRNA processing and 30S ribosomal subunit biogenesis and possibly also in cell cycle regulation and energy metabolism. The polypeptide is GTPase Era (Streptomyces coelicolor (strain ATCC BAA-471 / A3(2) / M145)).